The primary structure comprises 233 residues: Probable septum site-determining protein MinC (233 aa).

The protein belongs to the MinC family. As to quaternary structure, interacts with MinD and FtsZ.

Cell division inhibitor that blocks the formation of polar Z ring septums. Rapidly oscillates between the poles of the cell to destabilize FtsZ filaments that have formed before they mature into polar Z rings. Prevents FtsZ polymerization. The polypeptide is Probable septum site-determining protein MinC (Proteus mirabilis (strain HI4320)).